The chain runs to 514 residues: Adenylosuccinate synthetase 2, chloroplastic (514 aa).

The transit peptide at 1–56 directs the protein to the chloroplast; the sequence is MAMAAAAAVASQGLLATSSQQQKKSSAKLICNAATFFSGKRLLWVKSCNNGAVGLR. GTP contacts are provided by residues 100-106 and 128-130; these read GDEGKGK and GHT. Asp101 acts as the Proton acceptor in catalysis. Residues Asp101 and Gly128 each coordinate Mg(2+). IMP contacts are provided by residues 101-104, 126-129, Thr218, Arg232, Gln312, Thr327, and Arg391; these read DEGK and NAGH. The active-site Proton donor is His129. 387–393 serves as a coordination point for substrate; sequence TTTGRPR. GTP-binding positions include Arg393, 419 to 421, and 502 to 504; these read KLD and GVG.

This sequence belongs to the adenylosuccinate synthetase family. Homodimer. The cofactor is Mg(2+).

It is found in the plastid. Its subcellular location is the chloroplast. The enzyme catalyses IMP + L-aspartate + GTP = N(6)-(1,2-dicarboxyethyl)-AMP + GDP + phosphate + 2 H(+). The protein operates within purine metabolism; AMP biosynthesis via de novo pathway; AMP from IMP: step 1/2. Plays an important role in the de novo pathway and in the salvage pathway of purine nucleotide biosynthesis. Catalyzes the first committed step in the biosynthesis of AMP from IMP. The chain is Adenylosuccinate synthetase 2, chloroplastic from Physcomitrium patens (Spreading-leaved earth moss).